The chain runs to 641 residues: MEGPAFSKPLKDKINPWGPLIVLGILIRAGVSVQHDSPHQVFNVTWRVTNLMTGQTANATSLLGTMTDAFPKLYFDLCDLIGDDWDETGLGCRTPGGRKRARTFDFYVCPGHTVPTGCGGPREGYCGKWGCETTGQAYWKPSSSWDLISLKRRNTPQNQGPCYDSSAVSSDIKGATPGGRCNPLVLEFTDAGKKASWDGPKVWGLRLYRSTGTDPVTRFSLTRQVLNIGPRVPIGPNPVITDQLPPSRPVQIMLPRPPQPPPPGAASIVPETAPPSQQPGTGDRLLNLVDGAYQALNLTSPDKTQECWLCLVAGPPYYEGVAVLGTYSNHTSAPANCSVASQHKLTLSEVTGQGLCVGAVPKTHQALCNTTQKTSDGSYYLAAPAGTIWACNTGLTPCLSTTVLDLTTDYCVLVELWPKVTYHSPGYVYGQFERKTKYKREPVSLTLALLLGGLTMGGIAAGVGTGTTALVATKQFEQLQAAIHTDLGALEKSVSALEKSLTSLSEVVLQNRRGLDLLFLKEGGLCAALKEECCFYADHTGVVRDSMAKLRERLNQRQKLFESGQGWFEGLFNRSPWFTTLISTIMGPLIILLLILLFGPCILNRLVQFVKDRISVVQALVLTQQYHQLKSIDPEEVESRE.

The N-terminal stretch at 1–32 (MEGPAFSKPLKDKINPWGPLIVLGILIRAGVS) is a signal peptide. Over 33-581 (VQHDSPHQVF…FNRSPWFTTL (549 aa)) the chain is Extracellular. 2 N-linked (GlcNAc...) asparagine glycosylation sites follow: Asn-43 and Asn-58. 2 disulfide bridges follow: Cys-109/Cys-126 and Cys-118/Cys-131. Residues 256 to 281 (RPPQPPPPGAASIVPETAPPSQQPGT) form a disordered region. The N-linked (GlcNAc...) asparagine glycan is linked to Asn-297. 6 cysteine pairs are disulfide-bonded: Cys-307-Cys-310, Cys-307-Cys-534, Cys-337-Cys-391, Cys-356-Cys-368, Cys-398-Cys-411, and Cys-526-Cys-533. Positions 307 to 310 (CWLC) match the CXXC motif. Residue Asn-336 is glycosylated (N-linked (GlcNAc...) asparagine). The N-linked (GlcNAc...) asparagine glycan is linked to Asn-369. Positions 443–463 (VSLTLALLLGGLTMGGIAAGV) are fusion peptide. Coiled-coil stretches lie at residues 471 to 520 (VATK…LLFL) and 530 to 566 (KEEC…SGQG). Residues 509–525 (LQNRRGLDLLFLKEGGL) form an immunosuppression region. The CX6CC signature appears at 526-534 (CAALKEECC). A helical transmembrane segment spans residues 582–602 (ISTIMGPLIILLLILLFGPCI). Cys-601 carries S-palmitoyl cysteine lipidation. The Cytoplasmic segment spans residues 603-641 (LNRLVQFVKDRISVVQALVLTQQYHQLKSIDPEEVESRE). The YXXL motif; contains endocytosis signal signature appears at 626–629 (YHQL).

As to quaternary structure, the mature envelope protein (Env) consists of a trimer of SU-TM heterodimers attached by a labile interchain disulfide bond. Post-translationally, specific enzymatic cleavages in vivo yield mature proteins. Envelope glycoproteins are synthesized as an inactive precursor that is N-glycosylated and processed likely by host cell furin or by a furin-like protease in the Golgi to yield the mature SU and TM proteins. The cleavage site between SU and TM requires the minimal sequence [KR]-X-[KR]-R. The R-peptide is released from the C-terminus of the cytoplasmic tail of the TM protein upon particle formation as a result of proteolytic cleavage by the viral protease. Cleavage of this peptide is required for TM to become fusogenic. In terms of processing, the CXXC motif is highly conserved across a broad range of retroviral envelope proteins. It is thought to participate in the formation of a labile disulfide bond possibly with the CX6CC motif present in the transmembrane protein. Isomerization of the intersubunit disulfide bond to an SU intrachain disulfide bond is thought to occur upon receptor recognition in order to allow membrane fusion. The transmembrane protein is palmitoylated. Post-translationally, the R-peptide is palmitoylated.

It localises to the virion membrane. The protein resides in the cell membrane. Its function is as follows. The surface protein (SU) attaches the virus to the host cell by binding to its receptor. This interaction triggers the refolding of the transmembrane protein (TM) and is thought to activate its fusogenic potential by unmasking its fusion peptide. Fusion occurs at the host cell plasma membrane. In terms of biological role, the transmembrane protein (TM) acts as a class I viral fusion protein. Under the current model, the protein has at least 3 conformational states: pre-fusion native state, pre-hairpin intermediate state, and post-fusion hairpin state. During viral and target cell membrane fusion, the coiled coil regions (heptad repeats) assume a trimer-of-hairpins structure, positioning the fusion peptide in close proximity to the C-terminal region of the ectodomain. The formation of this structure appears to drive apposition and subsequent fusion of viral and target cell membranes. Membranes fusion leads to delivery of the nucleocapsid into the cytoplasm. This chain is MLV-related proviral Env polyprotein, found in Mus musculus (Mouse).